Here is a 165-residue protein sequence, read N- to C-terminus: Chaperone protein SicA (165 aa).

The protein belongs to the LcrH/SycD chaperone family. In terms of assembly, dimer or higher-order oligomers.

The protein localises to the cytoplasm. In terms of biological role, type III secretion-associated chaperone required for SipB and SipC stabilization. Prevents premature association of SipB with SipC, which may lead to their targeting for degradation. Along with InvF, required for transcription activation of sigDE (sopB pipC), sicAsipBCDA, and sopE. The polypeptide is Chaperone protein SicA (sicA) (Salmonella dublin).